The primary structure comprises 356 residues: Histidinol-phosphate aminotransferase 1 (356 aa).

An N6-(pyridoxal phosphate)lysine modification is found at K217.

The protein belongs to the class-II pyridoxal-phosphate-dependent aminotransferase family. Histidinol-phosphate aminotransferase subfamily. In terms of assembly, homodimer. It depends on pyridoxal 5'-phosphate as a cofactor.

The catalysed reaction is L-histidinol phosphate + 2-oxoglutarate = 3-(imidazol-4-yl)-2-oxopropyl phosphate + L-glutamate. Its pathway is amino-acid biosynthesis; L-histidine biosynthesis; L-histidine from 5-phospho-alpha-D-ribose 1-diphosphate: step 7/9. This is Histidinol-phosphate aminotransferase 1 from Burkholderia mallei (strain ATCC 23344).